Consider the following 311-residue polypeptide: Phosphoribosylaminoimidazole-succinocarboxamide synthase (311 aa).

The protein belongs to the SAICAR synthetase family.

The catalysed reaction is 5-amino-1-(5-phospho-D-ribosyl)imidazole-4-carboxylate + L-aspartate + ATP = (2S)-2-[5-amino-1-(5-phospho-beta-D-ribosyl)imidazole-4-carboxamido]succinate + ADP + phosphate + 2 H(+). It functions in the pathway purine metabolism; IMP biosynthesis via de novo pathway; 5-amino-1-(5-phospho-D-ribosyl)imidazole-4-carboxamide from 5-amino-1-(5-phospho-D-ribosyl)imidazole-4-carboxylate: step 1/2. This is Phosphoribosylaminoimidazole-succinocarboxamide synthase from Aromatoleum aromaticum (strain DSM 19018 / LMG 30748 / EbN1) (Azoarcus sp. (strain EbN1)).